Here is a 223-residue protein sequence, read N- to C-terminus: 3,4-dihydroxy-2-butanone 4-phosphate synthase (223 aa).

D-ribulose 5-phosphate is bound by residues arginine 47–glutamate 48, aspartate 52, arginine 160–threonine 164, and glutamate 184. A Mg(2+)-binding site is contributed by glutamate 48. Histidine 163 contributes to the Mg(2+) binding site.

It belongs to the DHBP synthase family. As to quaternary structure, homodimer. Mg(2+) serves as cofactor. It depends on Mn(2+) as a cofactor.

It catalyses the reaction D-ribulose 5-phosphate = (2S)-2-hydroxy-3-oxobutyl phosphate + formate + H(+). Its pathway is cofactor biosynthesis; riboflavin biosynthesis; 2-hydroxy-3-oxobutyl phosphate from D-ribulose 5-phosphate: step 1/1. In terms of biological role, catalyzes the conversion of D-ribulose 5-phosphate to formate and 3,4-dihydroxy-2-butanone 4-phosphate. This is 3,4-dihydroxy-2-butanone 4-phosphate synthase from Cupriavidus pinatubonensis (strain JMP 134 / LMG 1197) (Cupriavidus necator (strain JMP 134)).